The chain runs to 153 residues: RNA-binding protein 3 (153 aa).

Residues 6–84 (GKLFVGGLNF…RQIRVDHAGK (79 aa)) form the RRM domain. Arg47 carries the omega-N-methylarginine modification. Residues 81–153 (HAGKSARGSR…GGNYRDNYDN (73 aa)) form a disordered region. The span at 89–112 (SRGGAFGGRGRSYSRGGGDQGYGS) shows a compositional bias: gly residues. Position 103 is an asymmetric dimethylarginine; alternate (Arg103). Dimethylated arginine; alternate is present on Arg103. At Arg103 the chain carries Omega-N-methylarginine; alternate. Omega-N-methylarginine occurs at positions 118 and 128. A phosphoserine mark is found at Ser133 and Ser143. Tyr151 carries the phosphotyrosine modification.

As to quaternary structure, interacts with RPL4. Associates with the 60S ribosomal subunits in an RNA-independent manner. Post-translationally, arg-103 is dimethylated, probably to asymmetric dimethylarginine. Phosphorylated.

The protein localises to the nucleus. Its subcellular location is the cytoplasm. It localises to the cell projection. It is found in the dendrite. Cold-inducible mRNA binding protein that enhances global protein synthesis at both physiological and mild hypothermic temperatures. Reduces the relative abundance of microRNAs, when overexpressed. Enhances phosphorylation of translation initiation factors and active polysome formation. This is RNA-binding protein 3 (Rbm3) from Mus musculus (Mouse).